Here is a 920-residue protein sequence, read N- to C-terminus: KIN14B-interacting protein At4g14310 (920 aa).

The span at 1–10 shows a compositional bias: basic residues; sequence MSASTNRRRL. Disordered stretches follow at residues 1–199 and 309–375; these read MSAS…EKST and IDGP…EKPS. Polar residues predominate over residues 35–54; the sequence is PISSKNSNPALQKSLSSKEN. The span at 90–105 shows a compositional bias: low complexity; the sequence is TRSTSSGLRGRSSSPS. The segment covering 112 to 135 has biased composition (basic and acidic residues); sequence SDLRKRNESRVIGEKGESGQDKKS. 2 stretches are compositionally biased toward polar residues: residues 137–147 and 166–184; these read LKSSGFKQGTS and CPVNSSKFEGSSVARNSIS. Positions 327 to 337 are enriched in basic and acidic residues; it reads LNKEELEDRLL. The span at 345–355 shows a compositional bias: polar residues; that stretch reads SRTQSKTSSHV. The segment covering 357–374 has biased composition (basic and acidic residues); sequence KGHDSVESNKAVNAEEKP. The stretch at 435–463 forms a coiled coil; it reads TEILRANEALEEIDDEENREEMELEEIDD.

As to quaternary structure, interacts with KIN14B, CDKA-1, CKS1 and CKS2.

It is found in the cytoplasm. Functionally, might be involved in division plane determination. This is KIN14B-interacting protein At4g14310 from Arabidopsis thaliana (Mouse-ear cress).